Reading from the N-terminus, the 431-residue chain is Beta-1,4-glucuronyltransferase 1 (431 aa).

The Cytoplasmic portion of the chain corresponds to 1–11; the sequence is MHFSKKCSVFK. Residues 12 to 32 form a helical membrane-spanning segment; sequence VVLSALLIVALLQLLYLSFLS. Residues 33 to 431 are Lumenal-facing; that stretch reads KLHGKQQRYK…AKYPTSPRRC (399 aa). Asparagine 216 is a glycosylation site (N-linked (GlcNAc...) asparagine). Residues aspartate 241 and aspartate 243 each coordinate Mn(2+). A glycan (N-linked (GlcNAc...) asparagine) is linked at asparagine 314.

It belongs to the glycosyltransferase 49 family. Requires Mn(2+) as cofactor.

The protein resides in the golgi apparatus membrane. It catalyses the reaction 3-O-[beta-D-Xyl-(1-&gt;4)-Rib-ol-P-Rib-ol-P-3-beta-D-GalNAc-(1-&gt;3)-beta-D-GlcNAc-(1-&gt;4)-(O-6-P-alpha-D-Man)]-Thr-[protein] + UDP-alpha-D-glucuronate = 3-O-[beta-D-GlcA-(1-&gt;3)-beta-D-Xyl-(1-&gt;4)-Rib-ol-P-Rib-ol-P-3-beta-D-GalNAc-(1-&gt;3)-beta-D-GlcNAc-(1-&gt;4)-(O-6-P-alpha-D-Man)]-Thr-[protein] + UDP + H(+). Its pathway is protein modification; protein glycosylation. Beta-1,4-glucuronyltransferase involved in O-mannosylation of alpha-dystroglycan (DAG1). Transfers a glucuronic acid (GlcA) residue onto a xylose (Xyl) acceptor to produce the glucuronyl-beta-1,4-xylose-beta disaccharide primer, which is further elongated by LARGE, during synthesis of phosphorylated O-mannosyl glycan. Phosphorylated O-mannosyl glycan is a carbohydrate structure present in alpha-dystroglycan (DAG1), which is required for binding laminin G-like domain-containing extracellular proteins with high affinity. Required for axon guidance; via its function in O-mannosylation of alpha-dystroglycan (DAG1). The chain is Beta-1,4-glucuronyltransferase 1 from Danio rerio (Zebrafish).